Here is a 301-residue protein sequence, read N- to C-terminus: Glycine--tRNA ligase alpha subunit (301 aa).

This sequence belongs to the class-II aminoacyl-tRNA synthetase family. As to quaternary structure, tetramer of two alpha and two beta subunits.

The protein localises to the cytoplasm. The enzyme catalyses tRNA(Gly) + glycine + ATP = glycyl-tRNA(Gly) + AMP + diphosphate. The protein is Glycine--tRNA ligase alpha subunit of Nitrosospira multiformis (strain ATCC 25196 / NCIMB 11849 / C 71).